We begin with the raw amino-acid sequence, 297 residues long: Large ribosomal subunit protein uL24m (297 aa).

Serine 2 is subject to N-acetylserine. The 34-residue stretch at 63-96 (FIPGDRVVVMSGASKGNIAVIKSFDKRTNSFILD) folds into the KOW domain.

Belongs to the universal ribosomal protein uL24 family. As to quaternary structure, component of the mitochondrial large ribosomal subunit (mt-LSU). Mature yeast 74S mitochondrial ribosomes consist of a small (37S) and a large (54S) subunit. The 37S small subunit contains a 15S ribosomal RNA (15S mt-rRNA) and 34 different proteins. The 54S large subunit contains a 21S rRNA (21S mt-rRNA) and 46 different proteins. uL24m forms the wall of the exit tunnel.

The protein resides in the mitochondrion. In terms of biological role, component of the mitochondrial ribosome (mitoribosome), a dedicated translation machinery responsible for the synthesis of mitochondrial genome-encoded proteins, including at least some of the essential transmembrane subunits of the mitochondrial respiratory chain. The mitoribosomes are attached to the mitochondrial inner membrane and translation products are cotranslationally integrated into the membrane. The chain is Large ribosomal subunit protein uL24m (MRPL40) from Saccharomyces cerevisiae (strain ATCC 204508 / S288c) (Baker's yeast).